The chain runs to 426 residues: Glutamate-1-semialdehyde 2,1-aminomutase 2 (426 aa).

Residue Lys265 is modified to N6-(pyridoxal phosphate)lysine.

Belongs to the class-III pyridoxal-phosphate-dependent aminotransferase family. HemL subfamily. As to quaternary structure, homodimer. The cofactor is pyridoxal 5'-phosphate.

It is found in the cytoplasm. It catalyses the reaction (S)-4-amino-5-oxopentanoate = 5-aminolevulinate. It functions in the pathway porphyrin-containing compound metabolism; protoporphyrin-IX biosynthesis; 5-aminolevulinate from L-glutamyl-tRNA(Glu): step 2/2. The polypeptide is Glutamate-1-semialdehyde 2,1-aminomutase 2 (Lachnoclostridium phytofermentans (strain ATCC 700394 / DSM 18823 / ISDg) (Clostridium phytofermentans)).